The primary structure comprises 73 residues: Disintegrin molossin (73 aa).

The region spanning 1 to 73 is the Disintegrin domain; that stretch reads EAGIECDCGS…ADCPRNRFHA (73 aa). Cystine bridges form between C6/C21, C8/C16, C15/C38, C29/C35, C34/C59, and C47/C66. The Cell attachment site signature appears at 51–53; that stretch reads RGD.

The protein belongs to the venom metalloproteinase (M12B) family. P-II subfamily. P-IIa sub-subfamily. Monomer (disintegrin). In terms of tissue distribution, expressed by the venom gland.

The protein localises to the secreted. Its function is as follows. Inhibits fibrinogen interaction with platelets. Acts by binding to alpha-IIb/beta-3 (ITGA2B/ITGB3) on the platelet surface and inhibits aggregation induced by ADP, thrombin, platelet-activating factor and collagen. The polypeptide is Disintegrin molossin (Crotalus molossus molossus (Northern black-tailed rattlesnake)).